Here is a 104-residue protein sequence, read N- to C-terminus: MSPRKTYILKLYVAGNTPNSMRALKTLRNILETEFRGVYALKVIDVLKNPQLAEEDKILATPTLSKILPPPVRRIIGDLSDRERVLIGLDLLYDELADNAFSSG.

Belongs to the KaiB family. As to quaternary structure, the KaiABC complex composition changes during the circadian cycle to control KaiC phosphorylation. Complexes KaiC(6), KaiA(2-4):KaiC(6), KaiB(6):KaiC(6) and KaiC(6):KaiB(6):KaiA(12) are among the most important forms, many form cooperatively. Undergoes a major conformational rearrangment; in the free state forms homotetramers as a dimer of dimers. When bound to the CI domain of KaiC switches to a monomeric thioredoxin-fold (KaiB(fs)). KaiB(fs) binds CikA, leading it to dephosphorylate phospho-RpaA.

In terms of biological role, key component of the KaiABC oscillator complex, which constitutes the main circadian regulator in cyanobacteria. Complex composition changes during the circadian cycle to control KaiC phosphorylation. KaiA stimulates KaiC autophosphorylation, while KaiB sequesters KaiA, leading to KaiC autodephosphorylation. Phospho-Ser-431 KaiC accumulation triggers binding of KaiB to form the KaiB(6):KaiC(6) complex, leading to changes in output regulators CikA and SasA. KaiB switches to a thioredoxin-like fold (KaiB(fs)) when bound to KaiC. KaiB(6):KaiC(6) formation exposes a site for KaiA binding that sequesters KaiA from KaiC, making the KaiC(6):KaiB(6):KaiA(12) complex that results in KaiC autodephosphorylation. A metamorphic protein which reversibly switches between an inactive tetrameric fold and a rare, thioredoxin-like monomeric fold (KaiB(fs)). KaiB(fs) binds phospho-KaiC, KaiA and CikA. KaiA and CikA compete for binding to KaiB(fs), and KaiB(fs) and SasA compete for binding to KaiC, thus the clock oscillator and output signal pathway are tightly coupled. The chain is Circadian clock oscillator protein KaiB from Parasynechococcus marenigrum (strain WH8102).